The primary structure comprises 302 residues: Spheroidin-like protein (302 aa).

An N-terminal signal peptide occupies residues 1-19 (MIALLIALFAAIHAPAVRS). 2 N-linked (GlcNAc...) asparagine; by host glycosylation sites follow: asparagine 193 and asparagine 293.

Homodimer; disulfide-linked.

It localises to the host membrane. Functionally, component of the virus occlusion bodies, which are large proteinaceous structures (polyhedra), that protect the virus from the outside environment for extended periods until they are ingested by insect larvae. This Autographa californica nuclear polyhedrosis virus (AcMNPV) protein is Spheroidin-like protein (SLP).